The following is a 483-amino-acid chain: Alginate biosynthesis protein AlgA (483 aa).

Belongs to the mannose-6-phosphate isomerase type 2 family. In terms of assembly, monomer. Co(2+) serves as cofactor.

It catalyses the reaction D-mannose 6-phosphate = D-fructose 6-phosphate. It carries out the reaction alpha-D-mannose 1-phosphate + GTP + H(+) = GDP-alpha-D-mannose + diphosphate. It functions in the pathway nucleotide-sugar biosynthesis; GDP-alpha-D-mannose biosynthesis; GDP-alpha-D-mannose from alpha-D-mannose 1-phosphate (GTP route): step 1/1. The protein operates within nucleotide-sugar biosynthesis; GDP-alpha-D-mannose biosynthesis; alpha-D-mannose 1-phosphate from D-fructose 6-phosphate: step 1/2. Produces a precursor for alginate polymerization. The alginate layer provides a protective barrier against host immune defenses and antibiotics. The polypeptide is Alginate biosynthesis protein AlgA (algA) (Pseudomonas syringae pv. tomato (strain ATCC BAA-871 / DC3000)).